A 323-amino-acid chain; its full sequence is Beta-ketoacyl-[acyl-carrier-protein] synthase III (323 aa).

Catalysis depends on residues C112 and H250. The tract at residues 251 to 255 (QANYR) is ACP-binding. N280 is a catalytic residue.

Belongs to the thiolase-like superfamily. FabH family. In terms of assembly, homodimer.

The protein resides in the cytoplasm. It carries out the reaction malonyl-[ACP] + acetyl-CoA + H(+) = 3-oxobutanoyl-[ACP] + CO2 + CoA. It functions in the pathway lipid metabolism; fatty acid biosynthesis. In terms of biological role, catalyzes the condensation reaction of fatty acid synthesis by the addition to an acyl acceptor of two carbons from malonyl-ACP. Catalyzes the first condensation reaction which initiates fatty acid synthesis and may therefore play a role in governing the total rate of fatty acid production. Possesses both acetoacetyl-ACP synthase and acetyl transacylase activities. Its substrate specificity determines the biosynthesis of branched-chain and/or straight-chain of fatty acids. In Clostridium beijerinckii (strain ATCC 51743 / NCIMB 8052) (Clostridium acetobutylicum), this protein is Beta-ketoacyl-[acyl-carrier-protein] synthase III.